Here is a 310-residue protein sequence, read N- to C-terminus: tRNA dimethylallyltransferase (310 aa).

19 to 26 serves as a coordination point for ATP; it reads GPTGTGKS. 21–26 is a binding site for substrate; the sequence is TGTGKS.

It belongs to the IPP transferase family. Monomer. It depends on Mg(2+) as a cofactor.

The catalysed reaction is adenosine(37) in tRNA + dimethylallyl diphosphate = N(6)-dimethylallyladenosine(37) in tRNA + diphosphate. Catalyzes the transfer of a dimethylallyl group onto the adenine at position 37 in tRNAs that read codons beginning with uridine, leading to the formation of N6-(dimethylallyl)adenosine (i(6)A). This is tRNA dimethylallyltransferase from Saccharopolyspora erythraea (strain ATCC 11635 / DSM 40517 / JCM 4748 / NBRC 13426 / NCIMB 8594 / NRRL 2338).